Consider the following 528-residue polypeptide: uncharacterized protein (528 aa).

This is an uncharacterized protein from Giardia intestinalis (Giardia lamblia).